Reading from the N-terminus, the 177-residue chain is Putative adenylate kinase (177 aa).

ATP-binding residues include Gly10, Gly12, Lys13, Thr14, and Thr15. An NMP region spans residues 30–53 (DITEAVKKYKLYTEKDEDMDSYVI). The tract at residues 103–113 (KRGYKPKKVLE) is LID. Arg104 is a binding site for ATP.

Belongs to the adenylate kinase family. AK6 subfamily. Interacts with uS11. Not a structural component of 40S pre-ribosomes, but transiently interacts with them by binding to uS11.

It carries out the reaction AMP + ATP = 2 ADP. The catalysed reaction is ATP + H2O = ADP + phosphate + H(+). In terms of biological role, broad-specificity nucleoside monophosphate (NMP) kinase that catalyzes the reversible transfer of the terminal phosphate group between nucleoside triphosphates and monophosphates. Also has ATPase activity. Involved in the late maturation steps of the 30S ribosomal particles, specifically 16S rRNA maturation. While NMP activity is not required for ribosome maturation, ATPase activity is. Associates transiently with small ribosomal subunit protein uS11. ATP hydrolysis breaks the interaction with uS11. May temporarily remove uS11 from the ribosome to enable a conformational change of the ribosomal RNA that is needed for the final maturation step of the small ribosomal subunit. This Methanocaldococcus jannaschii (strain ATCC 43067 / DSM 2661 / JAL-1 / JCM 10045 / NBRC 100440) (Methanococcus jannaschii) protein is Putative adenylate kinase.